We begin with the raw amino-acid sequence, 271 residues long: Glutamate racemase (271 aa).

Residues 10 to 11 (DS) and 42 to 43 (YG) each bind substrate. Cys-73 (proton donor/acceptor) is an active-site residue. A substrate-binding site is contributed by 74-75 (NT). The active-site Proton donor/acceptor is the Cys-183. 184–185 (TH) serves as a coordination point for substrate.

It belongs to the aspartate/glutamate racemases family.

It catalyses the reaction L-glutamate = D-glutamate. The protein operates within cell wall biogenesis; peptidoglycan biosynthesis. Its function is as follows. Provides the (R)-glutamate required for cell wall biosynthesis. The polypeptide is Glutamate racemase (Streptococcus thermophilus (strain CNRZ 1066)).